Here is a 95-residue protein sequence, read N- to C-terminus: Complement inhibitor RaCI5 (95 aa).

Positions 1-21 (MNAVIVLCVTISAVLIHQCYS) are cleaved as a signal peptide. Disulfide bonds link C35–C59, C40–C61, and C55–C76.

This sequence belongs to the RaCI family. In terms of tissue distribution, expressed in salivary glands.

It localises to the secreted. In terms of biological role, complement inhibitor. Prevents complement-mediated C5 activation by binding to C5. Binds C5 at a different binding site than the other tick complement inhibitors OmCI and CirpT1, and the drug eculizumab. This is Complement inhibitor RaCI5 from Rhipicephalus appendiculatus (Brown ear tick).